We begin with the raw amino-acid sequence, 727 residues long: Cyclin-T1 (727 aa).

Serine 117 bears the Phosphoserine mark. The short motif at 253 to 270 (KRIWNWRAWQADRKTKAD) is the Nuclear localization signal element. Lysine 343 is covalently cross-linked (Glycyl lysine isopeptide (Lys-Gly) (interchain with G-Cter in SUMO2)). Serine 389 carries the post-translational modification Phosphoserine. The stretch at 389-420 (SLKEYRAKHAEELAAQKRQLENMEANVKSQYA) forms a coiled coil. Lysine 391 carries the N6-acetyllysine modification. Lysine 416 is covalently cross-linked (Glycyl lysine isopeptide (Lys-Gly) (interchain with G-Cter in SUMO2)). Residues serine 417 and serine 475 each carry the ADP-ribosylserine modification. Residues 481–551 (IKMRIKVHTA…RLGDPKHSSQ (71 aa)) form a histidine-rich domain (HRD) region. Residue lysine 482 forms a Glycyl lysine isopeptide (Lys-Gly) (interchain with G-Cter in SUMO2) linkage. Lysine 486 carries the N6-(ADP-ribosyl)lysine modification. Basic and acidic residues predominate over residues 487-507 (VHTAADKHNSVDDSVTKNREH). Disordered stretches follow at residues 487–631 (VHTA…QPSC) and 691–727 (YMNPRAGGMSSRSGNTDKPRPPPLPSEPPPPLPPLPK). Histidine 488 is subject to ADP-ribosylhistidine. Serine 496 and serine 500 each carry phosphoserine. Residues 508–531 (KEKHKTHPSNHHHHHNHHSHKHSH) are compositionally biased toward basic residues. Residue histidine 531 is modified to ADP-ribosylhistidine. ADP-ribosylserine is present on residues serine 532, serine 550, and serine 553. Histidine 557 is subject to ADP-ribosylhistidine. The segment covering 561–571 (SLSSSFSSSSS) has biased composition (low complexity). Serine 564 carries the post-translational modification ADP-ribosylserine. Serine 565 carries the post-translational modification Phosphoserine. Over residues 616–631 (GHSSDTSGLHFSQPSC) the composition is skewed to polar residues. Positions 711–727 (PPPLPSEPPPPLPPLPK) are enriched in pro residues.

The protein belongs to the cyclin family. Cyclin C subfamily. In terms of assembly, cyclin-T1 is the predominant cyclin that associates with CDK9 to form a heterodimer called P-TEFb. P-TEFb forms a complex with AFF4/AF5Q31. Component of a complex which is at least composed of HTATSF1/Tat-SF1, P-TEFb complex, RNA pol II, SUPT5H, and NCL/nucleolin. Component of the 7SK snRNP complex at least composed of P-TEFb (composed of CDK9 and CCNT1/cyclin-T1), HEXIM1, HEXIM2, BCDIN3, SART3 proteins and 7SK and U6 snRNAs. Interacts (via central region) with ZMYND8 (via N-terminus); the interaction is direct and the association appears to occur between homodimeric ZMYND8 and the activated form of the P-TEFb complex. Interacts with BRD4, targets chromatin binding. Interacts with JMJD6. Interacts with MDFIC. Interacts with HSF1. Interacts with HTATSF1. Interacts with TBX21. As to quaternary structure, (Microbial infection) Binds to BIV Tat, however Tat binds TAR RNA in a Cyc-T1-independent mode. Post-translationally, ADP-ribosylation on serine residues by PARP1 in response to DNA damage disrupts the phase separation activity of CCNT1, thereby preventing activation of CDK9.

It is found in the nucleus. In terms of biological role, regulatory subunit of the cyclin-dependent kinase pair (CDK9/cyclin-T1) complex, also called positive transcription elongation factor B (P-TEFb), which facilitates the transition from abortive to productive elongation by phosphorylating the CTD (C-terminal domain) of the large subunit of RNA polymerase II (RNA Pol II). Required to activate the protein kinase activity of CDK9: acts by mediating formation of liquid-liquid phase separation (LLPS) that enhances binding of P-TEFb to the CTD of RNA Pol II. The chain is Cyclin-T1 (CCNT1) from Bos taurus (Bovine).